We begin with the raw amino-acid sequence, 577 residues long: Steryl-sulfatase (577 aa).

An N-terminal signal peptide occupies residues 1–19 (MLWPCLLALLLSQLNFLCA). Topologically, residues 21–183 (RPGPGPNFLL…GTVFGSAQQV (163 aa)) are lumenal. Aspartate 34 and aspartate 35 together coordinate Ca(2+). An N-linked (GlcNAc...) asparagine glycan is attached at asparagine 46. Cysteine 74 lines the Ca(2+) pocket. Cysteine 74 (nucleophile) is an active-site residue. Residue cysteine 74 is modified to 3-oxoalanine (Cys). Histidine 135 is a catalytic residue. 2 disulfide bridges follow: cysteine 140/cysteine 147 and cysteine 169/cysteine 241. The helical transmembrane segment at 184 to 207 (FVVLPMNILGAVLLAMALARWAGL) threads the bilayer. The Cytoplasmic segment spans residues 208-211 (ARPP). Residues 212 to 233 (GWVFGVTVAAMAAVGGAYVAFL) form a helical membrane-spanning segment. Residues 234 to 577 (YHFRPANCFL…PLACRCAGDG (344 aa)) lie on the Lumenal side of the membrane. N-linked (GlcNAc...) asparagine glycosylation is present at asparagine 332. Ca(2+) is bound by residues aspartate 341 and histidine 342. 3 disulfide bridges follow: cysteine 445–cysteine 488, cysteine 480–cysteine 486, and cysteine 561–cysteine 571. Asparagine 458 is a glycosylation site (N-linked (GlcNAc...) asparagine).

Belongs to the sulfatase family. Homodimer. Requires Ca(2+) as cofactor. In terms of processing, the conversion to 3-oxoalanine (also known as C-formylglycine, FGly), of a serine or cysteine residue in prokaryotes and of a cysteine residue in eukaryotes, is critical for catalytic activity.

The protein resides in the microsome membrane. The protein localises to the endoplasmic reticulum membrane. It carries out the reaction dehydroepiandrosterone 3-sulfate + H2O = 3beta-hydroxyandrost-5-en-17-one + sulfate + H(+). The catalysed reaction is estrone 3-sulfate + H2O = estrone + sulfate + H(+). Functionally, catalyzes the conversion of sulfated steroid precursors, such as dehydroepiandrosterone sulfate (DHEA-S) and estrone sulfate to the free steroid. This chain is Steryl-sulfatase (Sts), found in Rattus norvegicus (Rat).